Consider the following 1843-residue polypeptide: Protein TIC 214 (1843 aa).

Transmembrane regions (helical) follow at residues 18-38, 64-84, 87-107, 124-144, 172-192, and 217-237; these read IINS…FSIG, FITG…HLAL, PHTI…WNNH, LSIQ…HFIL, VGWL…LFWI, and IFSI…PSPI. 5 disordered regions span residues 244–281, 557–576, 582–647, 724–744, and 1527–1586; these read ETSK…AAEK, EEIE…SRKA, FTDN…DEVA, NSEE…RQEN, and SLEL…KKKK. A compositionally biased stretch (acidic residues) spans 251-264; sequence REESEEETDVEIET. Basic and acidic residues predominate over residues 269–281; that stretch reads KGTKQEQEGAAEK. Residues 590 to 639 are compositionally biased toward low complexity; sequence NTPTSTTETTSTAETTSTTETTSTTKNTSTTKNTSTTETTSTTENENTSN. Composition is skewed to basic and acidic residues over residues 730–744 and 1527–1540; these read TKEK…RQEN and SLEL…KKPA. Residues 1543–1562 show a composition bias toward polar residues; sequence NIGSDTQKQGNPGSDPSTQQ. The segment covering 1563-1580 has biased composition (basic and acidic residues); it reads KDIKKNVKEDYDGRSDIQ.

This sequence belongs to the TIC214 family. As to quaternary structure, part of the Tic complex.

Its subcellular location is the plastid. The protein localises to the chloroplast inner membrane. Functionally, involved in protein precursor import into chloroplasts. May be part of an intermediate translocation complex acting as a protein-conducting channel at the inner envelope. The polypeptide is Protein TIC 214 (Nandina domestica (Heavenly bamboo)).